We begin with the raw amino-acid sequence, 290 residues long: uncharacterized protein (290 aa).

The signal sequence occupies residues 1–25 (MNKKSILSKTSLGSLFFLFGTALSA). C26 carries the N-palmitoyl cysteine lipid modification. C26 carries the S-diacylglycerol cysteine lipid modification. The segment at 183–203 (GTDSKGSGSNNQNGGVTEKDF) is disordered. Low complexity predominate over residues 186–197 (SKGSGSNNQNGG).

Belongs to the MG439/MG440 family.

The protein resides in the cell membrane. This is an uncharacterized protein from Mycoplasma pneumoniae (strain ATCC 29342 / M129 / Subtype 1) (Mycoplasmoides pneumoniae).